Here is a 260-residue protein sequence, read N- to C-terminus: MNRGDIFAKEFDTDPDVSTDSNYNNNNNSNNNNSIISNSNNNNNNNNNNVDDTDIEKHLYKVLLIGDYAVGKSSIIKRYCTGIFSPNYKLTIGVDFSVKDIEWEKNKIVSLQLWDIAGHERFGTMTRVYYRYAIAAIIVFDLSRPSTFDAVTKWREDVNSKVVLANQEPIPVLLLANKSDLSTSYVDSEMLDRFCKENNFIGWFATSASNDTNINEAMHFLTKEILEVAKTNHPPKPEEDTLELTKTNGEKSDDSKSCCK.

The interval 11-50 is disordered; the sequence is FDTDPDVSTDSNYNNNNNSNNNNSIISNSNNNNNNNNNNV. Positions 21 to 49 are enriched in low complexity; sequence SNYNNNNNSNNNNSIISNSNNNNNNNNNN. 66–73 lines the GTP pocket; the sequence is GDYAVGKS. Residues 88–96 carry the Effector region motif; that stretch reads YKLTIGVDF. GTP is bound by residues 115–119 and 177–180; these read DIAGH and NKSD. The interval 231–260 is disordered; the sequence is TNHPPKPEEDTLELTKTNGEKSDDSKSCCK. The segment covering 248-260 has biased composition (basic and acidic residues); that stretch reads NGEKSDDSKSCCK. 2 S-geranylgeranyl cysteine lipidation sites follow: Cys258 and Cys259.

This sequence belongs to the small GTPase superfamily. Rab family.

The polypeptide is Ras-related protein Rab-32B (rab32B) (Dictyostelium discoideum (Social amoeba)).